A 221-amino-acid polypeptide reads, in one-letter code: Placenta growth factor (221 aa).

Residues 1–18 form the signal peptide; it reads MPVMRLFPCFLQLLAGLA. The N-linked (GlcNAc...) asparagine glycan is linked to asparagine 33. 3 cysteine pairs are disulfide-bonded: cysteine 52–cysteine 94, cysteine 83–cysteine 128, and cysteine 87–cysteine 130. An N-linked (GlcNAc...) asparagine glycan is attached at asparagine 101. The tract at residues 175–221 is disordered; the sequence is QSAVWPSSPVPEEIPRMHPGRNGKKQQRKPLREKMKPERCGDAVPRR. The segment covering 192–203 has biased composition (basic residues); that stretch reads HPGRNGKKQQRK. Residues 193 to 213 are heparin-binding; sequence PGRNGKKQQRKPLREKMKPER. Positions 204–221 are enriched in basic and acidic residues; sequence PLREKMKPERCGDAVPRR.

It belongs to the PDGF/VEGF growth factor family. Antiparallel homodimer; disulfide-linked. Also found as heterodimer with VEGFA/VEGF. Isoform PlGF-3 is found both as homodimer and as monomer. In terms of processing, N-glycosylated. In terms of tissue distribution, while the three isoforms are present in most placental tissues, PlGF-2 is specific to early (8 week) placenta and only PlGF-1 is found in the colon and mammary carcinomas.

The protein localises to the secreted. Functionally, growth factor active in angiogenesis and endothelial cell growth, stimulating their proliferation and migration. It binds to the receptor FLT1/VEGFR-1. Isoform PlGF-2 binds NRP1/neuropilin-1 and NRP2/neuropilin-2 in a heparin-dependent manner. Also promotes cell tumor growth. This chain is Placenta growth factor (PGF), found in Homo sapiens (Human).